Consider the following 288-residue polypeptide: CUF1-dependent copper transporter 1 (288 aa).

N-linked (GlcNAc...) asparagine glycosylation occurs at Asn18. The helical transmembrane segment at 42-62 threads the bilayer; it reads MPSSAGATVGVCIGLFILAIF. 2 disordered regions span residues 106-125 and 154-180; these read PVLFNRRSSTKKEKDVYNPL and RESQEGSSAPSYAHSQQGQAQAQGSGV. Positions 158 to 167 are enriched in polar residues; sequence EGSSAPSYAH. A compositionally biased stretch (low complexity) spans 168 to 177; that stretch reads SQQGQAQAQG. Residues 251–271 form a helical membrane-spanning segment; that stretch reads LLMLVVMTFNIWWMISVVIGC.

This sequence belongs to the copper transporter (Ctr) (TC 1.A.56) family. SLC31A subfamily. Interacts with the copper acquisition factor BIM1.

The protein resides in the cell membrane. In terms of biological role, high affinity copper transporter involved in Cu(+) import into the cell upon copper-limitating conditions. Functions with BIM1 and probably also FRE4 and FRE7, where FRE4 and FRE7 metalloreductases liberate the Cu(2+) bound to the BIM1 copper-binding site for subsequent import of Cu(+) into the cell by CTR1, via the reduction of BIM1-bound Cu(2+) to Cu(+) to reduce binding affinity for BIM1 but increase affinity for CTR1. The BIM1-CTR1 pathway for copper uptake plays a key role in colonization in the brain where copper amounts are low and thus in cryptococcal meningitis. The protein is CUF1-dependent copper transporter 1 of Cryptococcus neoformans var. grubii serotype A (strain H99 / ATCC 208821 / CBS 10515 / FGSC 9487) (Filobasidiella neoformans var. grubii).